Here is a 120-residue protein sequence, read N- to C-terminus: Large ribosomal subunit protein bL20 (120 aa).

It belongs to the bacterial ribosomal protein bL20 family.

Its function is as follows. Binds directly to 23S ribosomal RNA and is necessary for the in vitro assembly process of the 50S ribosomal subunit. It is not involved in the protein synthesizing functions of that subunit. The sequence is that of Large ribosomal subunit protein bL20 from Mesoplasma florum (strain ATCC 33453 / NBRC 100688 / NCTC 11704 / L1) (Acholeplasma florum).